Reading from the N-terminus, the 697-residue chain is Sentrin-specific protease (697 aa).

Basic and acidic residues predominate over residues 1 to 14; that stretch reads MSRRSDLSDKDSQS. Disordered stretches follow at residues 1 to 47 and 365 to 387; these read MSRR…QGLG and SEESTSSSYRQHARSNSSESDSY. The Nuclear localization signal signature appears at 15 to 19; that stretch reads RKRHW. Residues 462–467 carry the Nuclear localization signal motif; it reads KVEKKK. The protease stretch occupies residues 501–664; that stretch reads IQICKKDLAT…VFSCQFGEWA (164 aa). Residues histidine 585, aspartate 602, and cysteine 653 contribute to the active site.

This sequence belongs to the peptidase C48 family.

The protein resides in the nucleus envelope. Functionally, protease that deconjugates smo-1 from targeted proteins and may catalyze the processing of smo-1 to its mature form. This Caenorhabditis elegans protein is Sentrin-specific protease (ulp-1).